The sequence spans 593 residues: ETS-related transcription factor Elf-2 (593 aa).

The residue at position 107 (Ser107) is a Phosphoserine. A disordered region spans residues 146–201 (VEVSTEESEPMDTSPIPTSPDSHEPMKKKKVGRKPKTQQSPISNGSPELGIKKKPR). Positions 171 to 181 (MKKKKVGRKPK) are enriched in basic residues. Thr182 bears the Phosphothreonine mark. The span at 182-191 (TQQSPISNGS) shows a compositional bias: polar residues. 2 positions are modified to phosphoserine: Ser185 and Ser191. Residues 208-290 (TYLWEFLLDL…EGQRLVYQFK (83 aa)) constitute a DNA-binding region (ETS). Ser363 and Ser372 each carry phosphoserine. Thr376 carries the phosphothreonine modification. Phosphoserine is present on Ser430. At Arg494 the chain carries Omega-N-methylarginine. A Phosphothreonine modification is found at Thr521. Lys536 participates in a covalent cross-link: Glycyl lysine isopeptide (Lys-Gly) (interchain with G-Cter in SUMO2).

Belongs to the ETS family. In terms of assembly, interacts with the LIM domains of LMO2. Interacts via its N-terminal region with RUNX1. As to expression, expressed in all fetal and adult tissues examined. Among fetal tissues, highest levels of expression detected in heart, lung, liver and kidney, and lower levels in brain. Among adult tissues, highest levels of expression detected in heart, placenta, lung, skeletal muscle, spleen, thymus, testis and ovary. Moderate expression in prostate, small intestine, kidney, liver and pancreas, and weak expression in colon, brain and peripheral blood lymphocytes.

The protein resides in the nucleus. Functionally, isoform 1 transcriptionally activates the LYN and BLK promoters and acts synergistically with RUNX1 to transactivate the BLK promoter. In terms of biological role, isoform 2 may function in repression of RUNX1-mediated transactivation. The polypeptide is ETS-related transcription factor Elf-2 (Homo sapiens (Human)).